A 572-amino-acid polypeptide reads, in one-letter code: Proline--tRNA ligase (572 aa).

The protein belongs to the class-II aminoacyl-tRNA synthetase family. ProS type 1 subfamily. Homodimer.

Its subcellular location is the cytoplasm. The enzyme catalyses tRNA(Pro) + L-proline + ATP = L-prolyl-tRNA(Pro) + AMP + diphosphate. Its function is as follows. Catalyzes the attachment of proline to tRNA(Pro) in a two-step reaction: proline is first activated by ATP to form Pro-AMP and then transferred to the acceptor end of tRNA(Pro). As ProRS can inadvertently accommodate and process non-cognate amino acids such as alanine and cysteine, to avoid such errors it has two additional distinct editing activities against alanine. One activity is designated as 'pretransfer' editing and involves the tRNA(Pro)-independent hydrolysis of activated Ala-AMP. The other activity is designated 'posttransfer' editing and involves deacylation of mischarged Ala-tRNA(Pro). The misacylated Cys-tRNA(Pro) is not edited by ProRS. The protein is Proline--tRNA ligase of Serratia proteamaculans (strain 568).